Consider the following 668-residue polypeptide: Endoplasmic reticulum oxidoreductin-1 (668 aa).

The N-terminal stretch at 1–22 (MKPASRLFYLSLFALWSPEAQC) is a signal peptide. Cystine bridges form between cysteine 79–cysteine 413, cysteine 89–cysteine 94, cysteine 150–cysteine 352, and cysteine 416–cysteine 419. The segment at 116–142 (KLEGPRAKHPGKSVQKEEPKRPLQGKL) is disordered. Arginine 186, threonine 188, tryptophan 199, serine 282, and histidine 285 together coordinate FAD. Asparagine 298 and asparagine 307 each carry an N-linked (GlcNAc...) asparagine glycan. Arginine 314 provides a ligand contact to FAD. N-linked (GlcNAc...) asparagine glycosylation occurs at asparagine 406. The active-site Nucleophile is cysteine 416. Cysteine 419 is an active-site residue. The N-linked (GlcNAc...) asparagine glycan is linked to asparagine 443. Disordered stretches follow at residues 488 to 519 (VEES…DRAK) and 554 to 597 (GVTP…DPNF). Polar residues predominate over residues 494–509 (GQQPQSHEQIEGSENS). Residues 570–581 (DNNDDDDDDDEF) are compositionally biased toward acidic residues.

It belongs to the EROs family. As to quaternary structure, may function both as a monomer and a homodimer. FAD is required as a cofactor.

The protein localises to the endoplasmic reticulum membrane. Functionally, essential oxidoreductase that oxidizes proteins in the endoplasmic reticulum to produce disulfide bonds. Acts by oxidizing directly pdi1 isomerase through a direct disulfide exchange. Does not act as a direct oxidant of folding substrate, but relies on pdi1 to transfer oxidizing equivalent. Does not oxidize all pdi related proteins, suggesting that it can discriminate between pdi1 and related proteins. Its reoxidation probably involves electron transfer to molecular oxygen via FAD. Acts independently of glutathione. May be responsible for a significant proportion of reactive oxygen species (ROS) in the cell, thereby being a source of oxidative stress. The polypeptide is Endoplasmic reticulum oxidoreductin-1 (ero-1) (Neurospora crassa (strain ATCC 24698 / 74-OR23-1A / CBS 708.71 / DSM 1257 / FGSC 987)).